Reading from the N-terminus, the 111-residue chain is Phosphoribosyl-ATP pyrophosphatase (111 aa).

It belongs to the PRA-PH family.

The protein localises to the cytoplasm. The catalysed reaction is 1-(5-phospho-beta-D-ribosyl)-ATP + H2O = 1-(5-phospho-beta-D-ribosyl)-5'-AMP + diphosphate + H(+). It participates in amino-acid biosynthesis; L-histidine biosynthesis; L-histidine from 5-phospho-alpha-D-ribose 1-diphosphate: step 2/9. This chain is Phosphoribosyl-ATP pyrophosphatase, found in Ectopseudomonas mendocina (strain ymp) (Pseudomonas mendocina).